The primary structure comprises 308 residues: Acetaldehyde dehydrogenase 2 (308 aa).

9-12 (SGNI) contacts NAD(+). The active-site Acyl-thioester intermediate is Cys-127. NAD(+) is bound by residues 158 to 166 (SAGPGTRAN) and Asn-286.

It belongs to the acetaldehyde dehydrogenase family.

The enzyme catalyses acetaldehyde + NAD(+) + CoA = acetyl-CoA + NADH + H(+). The protein is Acetaldehyde dehydrogenase 2 of Parafrankia sp. (strain EAN1pec).